Reading from the N-terminus, the 322-residue chain is Transcription factor IIIA (322 aa).

9 consecutive C2H2-type zinc fingers follow at residues 12-36, 42-64, 70-95, 102-126, 132-156, 159-184, 188-211, 218-243, and 249-273; these read FVCSFLNCKASFSKAWKLEAHYCKH, FACDRCDKTFCTRCQLTRHNLSH, YQCLEDGCSESFISTAGLKNHVERVH, YVCDYEGCAKEFRKKKQLRSHKCEH, FECQYEGCGKKYTTSKKLQKHEKVH, YPCAEEGCDFQGRMWTEYQAHRKAAH, LQCDSCAKVFHKAWFLKKHKLFVH, FKCTKEGCQKTYTTHFNLQNHILSFH, and FICPHDGCGKAFAMEGSLKRHAVVH. The interval 272–322 is disordered; that stretch reads VHDPQKKKLQKKTKRGRKKKLEPKTNVSDDSELPAQLHGLSLNTSTSQNNP. A compositionally biased stretch (basic residues) spans 278 to 292; the sequence is KKLQKKTKRGRKKKL. The span at 312 to 322 shows a compositional bias: polar residues; that stretch reads SLNTSTSQNNP.

Its subcellular location is the nucleus. In terms of biological role, involved in ribosomal large subunit biogenesis. Interacts with the internal control region (ICR) of approximately 50 bases within the 5S RNA genes, is required for correct transcription of these genes by RNA polymerase III. Also binds the transcribed 5S RNA's. This chain is Transcription factor IIIA (gtf3a), found in Ictalurus punctatus (Channel catfish).